We begin with the raw amino-acid sequence, 437 residues long: Cysteine--tRNA ligase (437 aa).

Residue cysteine 31 coordinates Zn(2+). The 'HIGH' region signature appears at 33–43 (PTVYNDLHLGN). The Zn(2+) site is built by cysteine 205, histidine 230, and glutamate 234. A 'KMSKS' region motif is present at residues 262–266 (KMSKS). Lysine 265 is an ATP binding site.

It belongs to the class-I aminoacyl-tRNA synthetase family. As to quaternary structure, monomer. The cofactor is Zn(2+).

Its subcellular location is the cytoplasm. The enzyme catalyses tRNA(Cys) + L-cysteine + ATP = L-cysteinyl-tRNA(Cys) + AMP + diphosphate. This chain is Cysteine--tRNA ligase (cysS), found in Mycoplasma pneumoniae (strain ATCC 29342 / M129 / Subtype 1) (Mycoplasmoides pneumoniae).